Reading from the N-terminus, the 336-residue chain is Large ribosomal subunit protein uL1m (336 aa).

A mitochondrion-targeting transit peptide spans 1-50 (MAAAVRCLRRVLIHHQRHCLCKMASQASLYPCSVNSLLHNRHFAAAAAAA). The residue at position 85 (S85) is a Phosphoserine.

Belongs to the universal ribosomal protein uL1 family.

It is found in the mitochondrion. The sequence is that of Large ribosomal subunit protein uL1m (Mrpl1) from Mus musculus (Mouse).